The primary structure comprises 484 residues: MASNQHSQRERTPDRSAQPPPPKMGRYFLDSESEEELEAVPLPPKKKVKKSMAAIPLSPESAEEEEAEPPRAVLGVMGFSMPPVRIMHHADGSQSFQKMETRQVHVLKASAQNSDENEKNVVVVRNPASQPLVSAWEKGMEAMAMLMEKYHVDHDERATFRFLPDQGSVYKKICTTWLNEEKRGLQLTFSSQKTFQELMGRFLQGYMQAYAGVQQNSWEPTGCCVWEHKCTEREGELRCLHGMEMVRKEHLVEMDVTSESGQRALKENPSKAKVAQNRWGRNVVQIKNDDARCCFHDVGCGNNSFSGKSCGLFYSEGMKAQIAFRQIEAFMLADYPHMRHGQKRLLMPVRCECLNKQDGLPRMGRQLCKITPFNLSNVDNIDINEVTDPGALASIKYPCLLVFQCANPVYRNARGNAGPNCDFKISAPDVMGALQLVRQLWGENFDGSPPRLVIPEFKWHQRLQYRNISLPTNHGDCREEPFDF.

The disordered stretch occupies residues 1-69 (MASNQHSQRE…ESAEEEEAEP (69 aa)). Residues 51-60 (SMAAIPLSPE) are compositionally biased toward low complexity. Y150 carries the post-translational modification Phosphotyrosine; by host. Positions 239 and 241 each coordinate Zn(2+). Residues 252–286 (VEMDVTSESGQRALKENPSKAKVAQNRWGRNVVQI) are flexible loop. The Zn(2+) site is built by C294, C310, C351, C353, C405, and C421. The segment at 468–484 (ISLPTNHGDCREEPFDF) is C-terminal arm, DBP binding.

It belongs to the adenoviridae E2A DNA-binding protein family. As to quaternary structure, homomultimerizes on viral ssDNA bound to pTP. Forms a initiation complex with viral polymerase, pTP and hosts NFIA and POU2F1/OCT1. Interacts with host SRCAP.

Its subcellular location is the host nucleus. Plays a role in the elongation phase of viral strand displacement replication by unwinding the template in an ATP-independent fashion, employing its capacity to form multimers. Also enhances the rate of initiation. Released from template upon second strand synthesis. Assembles in complex with viral pTP, viral pol, host NFIA and host POU2F1/OCT1 on viral origin of replication. Covers the whole ssDNA genome during synthesis. The complementary strand synthesis induces its relese from DNA template. May inhibit cellular transcription mediated by the interaction between host SRCAP and CBP. The polypeptide is DNA-binding protein (Human adenovirus A serotype 12 (HAdV-12)).